A 272-amino-acid chain; its full sequence is 3-hydroxyanthranilate 3,4-dioxygenase (272 aa).

The domain A (catalytic) stretch occupies residues 1 to 154; it reads MMEWIDENSS…SEEHKTGKPS (154 aa). Arginine 38 contributes to the O2 binding site. Residues histidine 42, glutamate 48, and histidine 86 each contribute to the Fe cation site. Glutamate 48 contributes to the substrate binding site. 2 residues coordinate substrate: arginine 90 and glutamate 100. A linker region spans residues 155–169; the sequence is KESSCSINVDTETEL. Residues 170–272 form a domain B region; sequence MEPFPLKQWL…SITVDSLANK (103 aa).

It belongs to the 3-HAO family. Fe(2+) is required as a cofactor.

The protein resides in the cytoplasm. The enzyme catalyses 3-hydroxyanthranilate + O2 = (2Z,4Z)-2-amino-3-carboxymuconate 6-semialdehyde. Its pathway is cofactor biosynthesis; NAD(+) biosynthesis; quinolinate from L-kynurenine: step 3/3. In terms of biological role, catalyzes the oxidative ring opening of 3-hydroxyanthranilate to 2-amino-3-carboxymuconate semialdehyde, which spontaneously cyclizes to quinolinate. This Nematostella vectensis (Starlet sea anemone) protein is 3-hydroxyanthranilate 3,4-dioxygenase.